The sequence spans 314 residues: Methionyl-tRNA formyltransferase (314 aa).

113 to 116 (SLLP) lines the (6S)-5,6,7,8-tetrahydrofolate pocket.

Belongs to the Fmt family.

The enzyme catalyses L-methionyl-tRNA(fMet) + (6R)-10-formyltetrahydrofolate = N-formyl-L-methionyl-tRNA(fMet) + (6S)-5,6,7,8-tetrahydrofolate + H(+). Functionally, attaches a formyl group to the free amino group of methionyl-tRNA(fMet). The formyl group appears to play a dual role in the initiator identity of N-formylmethionyl-tRNA by promoting its recognition by IF2 and preventing the misappropriation of this tRNA by the elongation apparatus. This Pseudomonas aeruginosa (strain LESB58) protein is Methionyl-tRNA formyltransferase.